A 638-amino-acid polypeptide reads, in one-letter code: Threonine--tRNA ligase (638 aa).

Positions 1 to 61 (MPIITLPDGS…NKDSKVVIIT (61 aa)) constitute a TGS domain. Residues 242–533 (DHRKLGKKHS…LIEQYEAKFP (292 aa)) are catalytic. 3 residues coordinate Zn(2+): Cys333, His384, and His510.

Belongs to the class-II aminoacyl-tRNA synthetase family. As to quaternary structure, homodimer. It depends on Zn(2+) as a cofactor.

It is found in the cytoplasm. It catalyses the reaction tRNA(Thr) + L-threonine + ATP = L-threonyl-tRNA(Thr) + AMP + diphosphate + H(+). Its function is as follows. Catalyzes the attachment of threonine to tRNA(Thr) in a two-step reaction: L-threonine is first activated by ATP to form Thr-AMP and then transferred to the acceptor end of tRNA(Thr). Also edits incorrectly charged L-seryl-tRNA(Thr). This Prochlorococcus marinus (strain AS9601) protein is Threonine--tRNA ligase.